We begin with the raw amino-acid sequence, 492 residues long: 3-octaprenyl-4-hydroxybenzoate carboxy-lyase (492 aa).

N175 contributes to the Mn(2+) binding site. Prenylated FMN is bound by residues 178 to 180, 192 to 194, and 197 to 198; these read IYR, RWL, and RG. E241 is a binding site for Mn(2+). D290 serves as the catalytic Proton donor.

This sequence belongs to the UbiD family. Homohexamer. The cofactor is prenylated FMN. Mn(2+) serves as cofactor.

It localises to the cell membrane. The enzyme catalyses a 4-hydroxy-3-(all-trans-polyprenyl)benzoate + H(+) = a 2-(all-trans-polyprenyl)phenol + CO2. It functions in the pathway cofactor biosynthesis; ubiquinone biosynthesis. Catalyzes the decarboxylation of 3-octaprenyl-4-hydroxy benzoate to 2-octaprenylphenol, an intermediate step in ubiquinone biosynthesis. This is 3-octaprenyl-4-hydroxybenzoate carboxy-lyase from Salmonella choleraesuis (strain SC-B67).